Consider the following 363-residue polypeptide: Glutamate--cysteine ligase (363 aa).

This sequence belongs to the glutamate--cysteine ligase type 2 family. YbdK subfamily.

It carries out the reaction L-cysteine + L-glutamate + ATP = gamma-L-glutamyl-L-cysteine + ADP + phosphate + H(+). Functionally, catalyzes the synthesis of gamma-glutamylcysteine (gamma-GC), the main low-molecular-weight thiol compound instead of glutathione in halophilic archaea. This is Glutamate--cysteine ligase from Haloquadratum walsbyi (strain DSM 16790 / HBSQ001).